The primary structure comprises 169 residues: Ribonuclease H (169 aa).

The region spanning 3-159 (AHAALTLYTD…CDRLATDAAR (157 aa)) is the RNase H type-1 domain. The Mg(2+) site is built by D12, E63, D87, and D151.

This sequence belongs to the RNase H family. Monomer. Mg(2+) is required as a cofactor.

It localises to the cytoplasm. It catalyses the reaction Endonucleolytic cleavage to 5'-phosphomonoester.. Functionally, endonuclease that specifically degrades the RNA of RNA-DNA hybrids. The polypeptide is Ribonuclease H (Treponema pallidum subsp. pallidum (strain SS14)).